Reading from the N-terminus, the 222-residue chain is Protein THYLAKOID ASSEMBLY 8, chloroplastic (222 aa).

The transit peptide at 1–32 (MALSLSQTRPPSLSHSHTLSVIVPKRTFVSIR) directs the protein to the chloroplast. PPR repeat units follow at residues 115–149 (DLVL…DQRS) and 150–184 (DDKA…GWGS).

This sequence belongs to the PPR family. P subfamily.

It localises to the plastid. The protein resides in the chloroplast thylakoid membrane. Its function is as follows. Essential protein required during embryogenesis. Mediates group II organellar RNA introns splicing (e.g. ycf3-2 and trnA). Binds weakly to specific RNA. Promotes the biogenesis of chloroplast thylakoid membranes. This is Protein THYLAKOID ASSEMBLY 8, chloroplastic from Arabidopsis thaliana (Mouse-ear cress).